The primary structure comprises 160 residues: Cytochrome b6-f complex subunit 4 (160 aa).

3 helical membrane passes run Leu36–Val56, Leu95–Glu115, and Ile131–Ile151.

The protein belongs to the cytochrome b family. PetD subfamily. In terms of assembly, the 4 large subunits of the cytochrome b6-f complex are cytochrome b6, subunit IV (17 kDa polypeptide, petD), cytochrome f and the Rieske protein, while the 4 small subunits are petG, petL, petM and petN. The complex functions as a dimer.

The protein resides in the plastid. It localises to the chloroplast thylakoid membrane. Component of the cytochrome b6-f complex, which mediates electron transfer between photosystem II (PSII) and photosystem I (PSI), cyclic electron flow around PSI, and state transitions. The sequence is that of Cytochrome b6-f complex subunit 4 from Chlamydomonas moewusii (Chlamydomonas eugametos).